We begin with the raw amino-acid sequence, 118 residues long: Large ribosomal subunit protein bL19 (118 aa).

It belongs to the bacterial ribosomal protein bL19 family.

In terms of biological role, this protein is located at the 30S-50S ribosomal subunit interface and may play a role in the structure and function of the aminoacyl-tRNA binding site. This chain is Large ribosomal subunit protein bL19, found in Campylobacter jejuni subsp. jejuni serotype O:6 (strain 81116 / NCTC 11828).